A 205-amino-acid polypeptide reads, in one-letter code: Glycerol-3-phosphate acyltransferase (205 aa).

Transmembrane regions (helical) follow at residues 8–28 (IALF…GYLA), 57–77 (TPAL…ILIA), 84–104 (ESLQ…PVWL), 118–138 (VFLG…LLIL), 143–163 (IVSL…LINS), and 164–184 (KETF…LVLW).

Belongs to the PlsY family. As to quaternary structure, probably interacts with PlsX.

The protein resides in the cell inner membrane. It catalyses the reaction an acyl phosphate + sn-glycerol 3-phosphate = a 1-acyl-sn-glycero-3-phosphate + phosphate. It functions in the pathway lipid metabolism; phospholipid metabolism. Functionally, catalyzes the transfer of an acyl group from acyl-phosphate (acyl-PO(4)) to glycerol-3-phosphate (G3P) to form lysophosphatidic acid (LPA). This enzyme utilizes acyl-phosphate as fatty acyl donor, but not acyl-CoA or acyl-ACP. This is Glycerol-3-phosphate acyltransferase from Prochlorococcus marinus (strain SARG / CCMP1375 / SS120).